The primary structure comprises 481 residues: NADH-quinone oxidoreductase subunit N (481 aa).

Helical transmembrane passes span 9-29 (MLPE…GIVV), 39-59 (AVSM…DHVA), 76-96 (CISR…FLCA), 104-124 (FSVV…AGHF), 158-178 (FFIL…LVYG), 205-225 (AFVL…MWAV), 232-252 (PMAA…LLLA), 265-285 (ILYG…LGAL), 293-313 (LLAY…VLHG), 318-338 (AIFH…SVLL), 359-379 (FVAF…PFLG), 399-419 (VAFP…FYCF), and 443-463 (LGLT…LFLA).

This sequence belongs to the complex I subunit 2 family. NDH-1 is composed of 14 different subunits. Subunits NuoA, H, J, K, L, M, N constitute the membrane sector of the complex.

It localises to the cell inner membrane. The enzyme catalyses a quinone + NADH + 5 H(+)(in) = a quinol + NAD(+) + 4 H(+)(out). Functionally, NDH-1 shuttles electrons from NADH, via FMN and iron-sulfur (Fe-S) centers, to quinones in the respiratory chain. The immediate electron acceptor for the enzyme in this species is believed to be ubiquinone. Couples the redox reaction to proton translocation (for every two electrons transferred, four hydrogen ions are translocated across the cytoplasmic membrane), and thus conserves the redox energy in a proton gradient. This chain is NADH-quinone oxidoreductase subunit N, found in Anaplasma marginale (strain Florida).